The sequence spans 111 residues: UPF0342 protein SAG1376 (111 aa).

The span at 52–63 shows a compositional bias: polar residues; that stretch reads QEMMQSGQMPSQ. Residues 52–71 are disordered; the sequence is QEMMQSGQMPSQEEQDEMSK.

Belongs to the UPF0342 family.

The protein is UPF0342 protein SAG1376 of Streptococcus agalactiae serotype V (strain ATCC BAA-611 / 2603 V/R).